The following is a 92-amino-acid chain: Small ribosomal subunit protein uS19c (92 aa).

This sequence belongs to the universal ribosomal protein uS19 family.

The protein localises to the plastid. It is found in the chloroplast. Protein S19 forms a complex with S13 that binds strongly to the 16S ribosomal RNA. This chain is Small ribosomal subunit protein uS19c (rps19), found in Marchantia polymorpha (Common liverwort).